The chain runs to 472 residues: Bifunctional protein HldE (472 aa).

Positions 1–315 (MAKRVKILVV…QLLNSSFGAN (315 aa)) are ribokinase. Residue 192–195 (NKKE) participates in ATP binding. The active site involves Asp-260. The segment at 340–472 (FTNGCFDILH…IKDAKNDDKK (133 aa)) is cytidylyltransferase.

The protein in the N-terminal section; belongs to the carbohydrate kinase PfkB family. It in the C-terminal section; belongs to the cytidylyltransferase family. As to quaternary structure, homodimer.

The catalysed reaction is D-glycero-beta-D-manno-heptose 7-phosphate + ATP = D-glycero-beta-D-manno-heptose 1,7-bisphosphate + ADP + H(+). It catalyses the reaction D-glycero-beta-D-manno-heptose 1-phosphate + ATP + H(+) = ADP-D-glycero-beta-D-manno-heptose + diphosphate. The protein operates within nucleotide-sugar biosynthesis; ADP-L-glycero-beta-D-manno-heptose biosynthesis; ADP-L-glycero-beta-D-manno-heptose from D-glycero-beta-D-manno-heptose 7-phosphate: step 1/4. It participates in nucleotide-sugar biosynthesis; ADP-L-glycero-beta-D-manno-heptose biosynthesis; ADP-L-glycero-beta-D-manno-heptose from D-glycero-beta-D-manno-heptose 7-phosphate: step 3/4. Functionally, catalyzes the phosphorylation of D-glycero-D-manno-heptose 7-phosphate at the C-1 position to selectively form D-glycero-beta-D-manno-heptose-1,7-bisphosphate. Catalyzes the ADP transfer from ATP to D-glycero-beta-D-manno-heptose 1-phosphate, yielding ADP-D-glycero-beta-D-manno-heptose. This chain is Bifunctional protein HldE, found in Campylobacter concisus (strain 13826).